The following is a 306-amino-acid chain: Mitochondrial 2-oxoglutarate/malate carrier protein (306 aa).

3 Solcar repeats span residues 7-95 (VPNV…LLER), 103-194 (LSFG…AKQA), and 203-292 (DGIF…MNAA). 6 consecutive transmembrane segments (helical) span residues 9–38 (NVVK…NRMQ), 72–93 (SAGL…AFLL), 108–122 (KAVL…GSFV), 172–192 (PTVL…SQAK), 205–226 (IFCH…SMPV), and 268–286 (FTPY…FIIL).

The protein belongs to the mitochondrial carrier (TC 2.A.29) family. In terms of assembly, interacts with ant-1.1 and ced-9. In terms of tissue distribution, ubiquitously expressed, but highly expressed in the anterior pharynx.

It localises to the mitochondrion. Its subcellular location is the mitochondrion inner membrane. The enzyme catalyses (S)-malate(in) + 2-oxoglutarate(out) = (S)-malate(out) + 2-oxoglutarate(in). The catalysed reaction is malonate(in) + 2-oxoglutarate(out) = malonate(out) + 2-oxoglutarate(in). It carries out the reaction succinate(in) + 2-oxoglutarate(out) = succinate(out) + 2-oxoglutarate(in). It catalyses the reaction maleate(in) + 2-oxoglutarate(out) = maleate(out) + 2-oxoglutarate(in). The enzyme catalyses oxaloacetate(in) + 2-oxoglutarate(out) = oxaloacetate(out) + 2-oxoglutarate(in). Catalyzes the transport of 2-oxoglutarate (alpha-oxoglutarate) across the inner mitochondrial membrane in an electroneutral exchange for malate. Can also exchange 2-oxoglutarate for other dicarboxylic acids such as malonate, succinate, maleate and oxaloacetate, although with lower affinity. Contributes to several metabolic processes, including the malate-aspartate shuttle, the oxoglutarate/isocitrate shuttle, in gluconeogenesis from lactate, and in nitrogen metabolism. Maintains mitochondrial fusion and fission events, and the organization and morphology of cristae. Regulator of apoptosis, insulin secretion and germline proliferation. Furthermore, plays a role in the oxidative stress response regulating endogenous levels of reactive oxygen species (ROS). Involved in the regulation of lin-35/Rb-mediated apoptosis in the germline. The chain is Mitochondrial 2-oxoglutarate/malate carrier protein from Caenorhabditis elegans.